We begin with the raw amino-acid sequence, 541 residues long: Zinc finger protein 329 (541 aa).

Ser-50 bears the Phosphoserine mark. 12 consecutive C2H2-type zinc fingers follow at residues 203-225 (YRCT…HRTH), 231-253 (YTCN…QRIH), 259-281 (YECS…QRIH), 287-309 (YECL…QRTH), 315-337 (YRCN…LRIH), 343-365 (YECS…ERTH), 371-393 (FECA…QKIH), 399-421 (YECK…QRIH), 427-449 (YGCN…QRTH), 455-477 (YECN…QRIH), 483-505 (YQCP…QRLH), and 511-533 (SRCP…QRAH).

The protein belongs to the krueppel C2H2-type zinc-finger protein family.

Its subcellular location is the nucleus. May be involved in transcriptional regulation. In Homo sapiens (Human), this protein is Zinc finger protein 329 (ZNF329).